The chain runs to 92 residues: Conotoxin Mr15.2 (92 aa).

The first 20 residues, 1–20 (MSTLKMMLLILLLLLPMATF), serve as a signal peptide directing secretion. A propeptide spanning residues 21-53 (DSDGQAIPGGGIPSAVNSRVGGDEKSGRSLEKR) is cleaved from the precursor. The tract at residues 30 to 49 (GGIPSAVNSRVGGDEKSGRS) is disordered.

Belongs to the conotoxin N superfamily. Post-translationally, contains 4 disulfide bonds. Expressed by the venom duct.

It is found in the secreted. This chain is Conotoxin Mr15.2, found in Conus marmoreus (Marble cone).